A 228-amino-acid polypeptide reads, in one-letter code: DNA repair and recombination protein RadB (228 aa).

Belongs to the eukaryotic RecA-like protein family. RadB subfamily.

Its function is as follows. Involved in DNA repair and in homologous recombination. May regulate the cleavage reactions of the branch-structured DNA. Has a very weak ATPase activity that is not stimulated by DNA. Binds DNA but does not promote DNA strands exchange. The polypeptide is DNA repair and recombination protein RadB (Thermococcus sibiricus (strain DSM 12597 / MM 739)).